Here is a 365-residue protein sequence, read N- to C-terminus: Chorismate synthase (365 aa).

Residues arginine 48 and arginine 54 each contribute to the NADP(+) site. FMN is bound by residues 125–127 (RSS), 237–238 (NA), glycine 277, 292–296 (KPTSS), and arginine 318.

It belongs to the chorismate synthase family. Homotetramer. Requires FMNH2 as cofactor.

It carries out the reaction 5-O-(1-carboxyvinyl)-3-phosphoshikimate = chorismate + phosphate. It functions in the pathway metabolic intermediate biosynthesis; chorismate biosynthesis; chorismate from D-erythrose 4-phosphate and phosphoenolpyruvate: step 7/7. Its function is as follows. Catalyzes the anti-1,4-elimination of the C-3 phosphate and the C-6 proR hydrogen from 5-enolpyruvylshikimate-3-phosphate (EPSP) to yield chorismate, which is the branch point compound that serves as the starting substrate for the three terminal pathways of aromatic amino acid biosynthesis. This reaction introduces a second double bond into the aromatic ring system. In Verminephrobacter eiseniae (strain EF01-2), this protein is Chorismate synthase.